The following is a 273-amino-acid chain: 4-hydroxy-tetrahydrodipicolinate reductase (273 aa).

12–17 (GAGGRM) is a binding site for NAD(+). Arg39 contacts NADP(+). Residues 102–104 (GTT) and 126–129 (AANF) contribute to the NAD(+) site. The active-site Proton donor/acceptor is the His159. (S)-2,3,4,5-tetrahydrodipicolinate is bound at residue His160. The active-site Proton donor is Lys163. (S)-2,3,4,5-tetrahydrodipicolinate is bound at residue 169–170 (GT).

The protein belongs to the DapB family. As to quaternary structure, homotetramer.

Its subcellular location is the cytoplasm. It carries out the reaction (S)-2,3,4,5-tetrahydrodipicolinate + NAD(+) + H2O = (2S,4S)-4-hydroxy-2,3,4,5-tetrahydrodipicolinate + NADH + H(+). The catalysed reaction is (S)-2,3,4,5-tetrahydrodipicolinate + NADP(+) + H2O = (2S,4S)-4-hydroxy-2,3,4,5-tetrahydrodipicolinate + NADPH + H(+). The protein operates within amino-acid biosynthesis; L-lysine biosynthesis via DAP pathway; (S)-tetrahydrodipicolinate from L-aspartate: step 4/4. Functionally, catalyzes the conversion of 4-hydroxy-tetrahydrodipicolinate (HTPA) to tetrahydrodipicolinate. The sequence is that of 4-hydroxy-tetrahydrodipicolinate reductase from Sodalis glossinidius (strain morsitans).